The chain runs to 396 residues: Elongation factor Tu (396 aa).

Residues 10-206 enclose the tr-type G domain; the sequence is KPHVNVGTIG…ALDSYIPEPE (197 aa). The G1 stretch occupies residues 19-26; sequence GHVDHGKT. A GTP-binding site is contributed by 19–26; it reads GHVDHGKT. Thr-26 is a binding site for Mg(2+). The interval 60–64 is G2; the sequence is GITIN. The segment at 81–84 is G3; the sequence is DCPG. Residues 81–85 and 136–139 each bind GTP; these read DCPGH and NKAD. The G4 stretch occupies residues 136 to 139; the sequence is NKAD. Residues 174–176 form a G5 region; the sequence is SAL.

This sequence belongs to the TRAFAC class translation factor GTPase superfamily. Classic translation factor GTPase family. EF-Tu/EF-1A subfamily. In terms of assembly, monomer.

It localises to the cytoplasm. The catalysed reaction is GTP + H2O = GDP + phosphate + H(+). Its function is as follows. GTP hydrolase that promotes the GTP-dependent binding of aminoacyl-tRNA to the A-site of ribosomes during protein biosynthesis. This is Elongation factor Tu from Nitrosomonas europaea (strain ATCC 19718 / CIP 103999 / KCTC 2705 / NBRC 14298).